The sequence spans 200 residues: Holliday junction resolvase RecU (200 aa).

A disordered region spans residues 1-25 (MTIRYPNGKRYNQASQPQKTPIKTH). Positions 10–25 (RYNQASQPQKTPIKTH) are enriched in polar residues. Residues threonine 85, aspartate 87, glutamate 100, and glutamine 119 each coordinate Mg(2+).

It belongs to the RecU family. The cofactor is Mg(2+).

It is found in the cytoplasm. The catalysed reaction is Endonucleolytic cleavage at a junction such as a reciprocal single-stranded crossover between two homologous DNA duplexes (Holliday junction).. Functionally, endonuclease that resolves Holliday junction intermediates in genetic recombination. Cleaves mobile four-strand junctions by introducing symmetrical nicks in paired strands. Promotes annealing of linear ssDNA with homologous dsDNA. Required for DNA repair, homologous recombination and chromosome segregation. This Bacillus cereus (strain G9842) protein is Holliday junction resolvase RecU.